Here is a 324-residue protein sequence, read N- to C-terminus: Phosphomevalonate decarboxylase (324 aa).

The protein belongs to the phosphomevalonate decarboxylase family.

It carries out the reaction (R)-5-phosphomevalonate + ATP = isopentenyl phosphate + ADP + phosphate + CO2. Its activity is regulated as follows. Is strongly inhibited by 6-fluoromevalonate monophosphate but shows negligible inhibition by 6-fluoromevalonate diphosphate (a potent inhibitor of the classical mevalonate pathway). Catalyzes the decarboxylation of mevalonate 5-phosphate (MVAP) to isopentenyl phosphate (IP). Functions in an alternate mevalonate (MVA) pathway leading to isopentenyl diphosphate (IPP), a key precursor for the biosynthesis of isoprenoid compounds such as archaeal membrane lipids. The protein is Phosphomevalonate decarboxylase (mvaD) of Haloferax volcanii (strain ATCC 29605 / DSM 3757 / JCM 8879 / NBRC 14742 / NCIMB 2012 / VKM B-1768 / DS2) (Halobacterium volcanii).